The sequence spans 457 residues: Chromosomal replication initiator protein DnaA (457 aa).

The domain I, interacts with DnaA modulators stretch occupies residues 1–77 (MDTNNNIEKE…EILSQNKVGM (77 aa)). Positions 77–108 (MHLAHSVDVRIEVAPKIQVNAQSNINYKATKT) are domain II. The segment at 109–323 (SVKDSYTFEN…GAIIKISVNA (215 aa)) is domain III, AAA+ region. Gly-153, Gly-155, Lys-156, and Thr-157 together coordinate ATP. Residues 324–457 (NLMNATIDLN…DKKTAFNSSE (134 aa)) are domain IV, binds dsDNA.

This sequence belongs to the DnaA family. As to quaternary structure, oligomerizes as a right-handed, spiral filament on DNA at oriC.

Its subcellular location is the cytoplasm. In terms of biological role, plays an essential role in the initiation and regulation of chromosomal replication. ATP-DnaA binds to the origin of replication (oriC) to initiate formation of the DNA replication initiation complex once per cell cycle. Binds the DnaA box (a 9 base pair repeat at the origin) and separates the double-stranded (ds)DNA. Forms a right-handed helical filament on oriC DNA; dsDNA binds to the exterior of the filament while single-stranded (ss)DNA is stabiized in the filament's interior. The ATP-DnaA-oriC complex binds and stabilizes one strand of the AT-rich DNA unwinding element (DUE), permitting loading of DNA polymerase. After initiation quickly degrades to an ADP-DnaA complex that is not apt for DNA replication. Binds acidic phospholipids. This Helicobacter pylori (strain J99 / ATCC 700824) (Campylobacter pylori J99) protein is Chromosomal replication initiator protein DnaA.